Consider the following 691-residue polypeptide: Beta-galactosidase III (691 aa).

2 residues coordinate substrate: R121 and N159. The active-site Proton donor is E160. Residue E318 is the Nucleophile of the active site. Residues W326 and 366 to 369 (EKWH) contribute to the substrate site.

It belongs to the glycosyl hydrolase 42 family.

The catalysed reaction is Hydrolysis of terminal non-reducing beta-D-galactose residues in beta-D-galactosides.. Functionally, specific for beta-D-anomer-linked galactoside substrates. Hydrolyzes o-nitrophenyl-beta-D-galactopyranoside (ONPG), chromogen 5-bromo-4-chloro-3-indolyl-beta-D-galactopyranoside (X-gal) and to a lesser extent lactose. Hydrolyzes p-nitrophenyl-beta-D-galacturonide very slightly. Does not hydrolyze maltose, sucrose, raffinose or melibiose. Has some transgalactosylation activity yielding galacto-oligosaccharides (GaOS), including O-beta-D-galactopyranosyl-(1,3)-O-beta-D-galactopyranosyl-(1-4)-D-glucopyranose. The polypeptide is Beta-galactosidase III (Bifidobacterium longum subsp. infantis).